Consider the following 493-residue polypeptide: Alpha-amylase-related protein (493 aa).

A signal peptide spans 1-19; sequence MFKFATAVILCLAASSTLA. At Gln20 the chain carries Pyrrolidone carboxylic acid. Cysteines 47 and 103 form a disulfide. Positions 117, 168, and 177 each coordinate Ca(2+). Cys156 and Cys170 are disulfide-bonded. Arg205 is a chloride binding site. The active-site Nucleophile is Asp207. His211 provides a ligand contact to Ca(2+). Catalysis depends on Glu244, which acts as the Proton donor. Positions 307 and 342 each coordinate chloride. Disulfide bonds link Cys375/Cys381, Cys417/Cys440, and Cys447/Cys459.

It belongs to the glycosyl hydrolase 13 family. In terms of assembly, monomer. Ca(2+) serves as cofactor. Chloride is required as a cofactor.

Its subcellular location is the secreted. The enzyme catalyses Endohydrolysis of (1-&gt;4)-alpha-D-glucosidic linkages in polysaccharides containing three or more (1-&gt;4)-alpha-linked D-glucose units.. This chain is Alpha-amylase-related protein (Amyrel), found in Drosophila ananassae (Fruit fly).